The chain runs to 190 residues: MELILGSQSSTRANLLKEHGIKFEQKALYFDEESLKTTDPREFVYLACKGKLEKAKELLANNCAIVVADSVVSVGNRMQRKAKNKQEALEFLKRQNGHEIEVLTCSALISPVLEWLDLSVFRARLKAFDPSEIEKYLESGLWQESAGCVRLEDFHKPYIKSSSENLSVGLGLNVEGLLGALKLGAKLSSL.

Residue D69 is the Proton acceptor of the active site.

It belongs to the Maf family. A divalent metal cation is required as a cofactor.

The protein resides in the cytoplasm. It catalyses the reaction a ribonucleoside 5'-triphosphate + H2O = a ribonucleoside 5'-phosphate + diphosphate + H(+). The enzyme catalyses a 2'-deoxyribonucleoside 5'-triphosphate + H2O = a 2'-deoxyribonucleoside 5'-phosphate + diphosphate + H(+). Functionally, nucleoside triphosphate pyrophosphatase. May have a dual role in cell division arrest and in preventing the incorporation of modified nucleotides into cellular nucleic acids. In Helicobacter pylori (strain ATCC 700392 / 26695) (Campylobacter pylori), this protein is Nucleoside triphosphate pyrophosphatase.